A 432-amino-acid chain; its full sequence is Mannan endo-1,4-beta-mannosidase 1 (432 aa).

A signal peptide spans 1–28 (MRLLGAHRAALLVLACVVVVVIHGLGEA). Substrate contacts are provided by tryptophan 93 and asparagine 209. Residue glutamate 210 is the Proton donor of the active site. Substrate is bound at residue tyrosine 289. Residue glutamate 329 is the Nucleophile of the active site. Tryptophan 371 is a binding site for substrate.

Belongs to the glycosyl hydrolase 5 (cellulase A) family. In terms of tissue distribution, ubiquitous.

The protein resides in the secreted. The enzyme catalyses Random hydrolysis of (1-&gt;4)-beta-D-mannosidic linkages in mannans, galactomannans and glucomannans.. The sequence is that of Mannan endo-1,4-beta-mannosidase 1 (MAN1) from Oryza sativa subsp. japonica (Rice).